We begin with the raw amino-acid sequence, 92 residues long: Protein S100-A5 (92 aa).

2 consecutive EF-hand domains span residues 12–47 and 47–82; these read MVTT…LGEM and MKES…LCMA. The Ca(2+) site is built by threonine 28, glutamate 33, aspartate 60, asparagine 62, aspartate 64, glutamate 66, and glutamate 71.

This sequence belongs to the S-100 family. Homodimer.

Functionally, binds calcium, zinc and copper. One subunit can simultaneously bind 2 calcium ions or 2 copper ions plus 1 zinc ion. Calcium and copper ions compete for the same binding sites. This Homo sapiens (Human) protein is Protein S100-A5 (S100A5).